The sequence spans 97 residues: UPF0147 protein MA_0092 (97 aa).

It belongs to the UPF0147 family.

The sequence is that of UPF0147 protein MA_0092 from Methanosarcina acetivorans (strain ATCC 35395 / DSM 2834 / JCM 12185 / C2A).